The chain runs to 570 residues: Arginine--tRNA ligase (570 aa).

The short motif at 127–137 (ANPTGPLHLGH) is the 'HIGH' region element.

It belongs to the class-I aminoacyl-tRNA synthetase family. In terms of assembly, monomer.

Its subcellular location is the cytoplasm. The catalysed reaction is tRNA(Arg) + L-arginine + ATP = L-arginyl-tRNA(Arg) + AMP + diphosphate. The protein is Arginine--tRNA ligase of Neorickettsia sennetsu (strain ATCC VR-367 / Miyayama) (Ehrlichia sennetsu).